Consider the following 140-residue polypeptide: MSPEIPPEWKKFRYRGKSLEDLLNMPMDEFIKLLPSRQRRSLKRGFSDKQRRLLEKIRKISREGKQNKVIKTHVRNMVILPEMVGLRFAVYNGKEFVEFQVVPEMIGRYLGEYSITTKKVEHGEPGLKATKSSLFLAMKG.

It belongs to the universal ribosomal protein uS19 family.

Protein S19 forms a complex with S13 that binds strongly to the 16S ribosomal RNA. This is Small ribosomal subunit protein uS19 from Sulfolobus acidocaldarius (strain ATCC 33909 / DSM 639 / JCM 8929 / NBRC 15157 / NCIMB 11770).